Reading from the N-terminus, the 313-residue chain is Vacuolar membrane protein ZYRO0A01628g (313 aa).

Positions Ser-22–Ala-37 are enriched in low complexity. The disordered stretch occupies residues Ser-22–Pro-48. A helical membrane pass occupies residues Gly-59–Trp-79. Over residues Thr-221–Leu-234 the composition is skewed to low complexity. The segment at Thr-221–Thr-313 is disordered. The segment covering Asp-235–Pro-247 has biased composition (basic and acidic residues). Over residues Lys-248–Asn-257 the composition is skewed to basic residues. The segment covering Asn-285–Leu-301 has biased composition (polar residues).

Belongs to the PRM5 family.

It localises to the vacuole membrane. The polypeptide is Vacuolar membrane protein ZYRO0A01628g (Zygosaccharomyces rouxii (strain ATCC 2623 / CBS 732 / NBRC 1130 / NCYC 568 / NRRL Y-229)).